The sequence spans 221 residues: Jacalin-related lectin 47 (221 aa).

2 Jacalin-type lectin domains span residues 1 to 64 and 71 to 217; these read MDSN…YYYP and SEKL…HVLP.

This sequence belongs to the jacalin lectin family.

The protein is Jacalin-related lectin 47 (JAL47) of Arabidopsis thaliana (Mouse-ear cress).